The following is a 423-amino-acid chain: Dihydrolipoyllysine-residue succinyltransferase component of 2-oxoglutarate dehydrogenase complex (423 aa).

The Lipoyl-binding domain occupies Met-1–Gly-76. An N6-lipoyllysine modification is found at Lys-42. The interval Gly-76–Asn-185 is disordered. The segment covering Gly-80–Asp-96 has biased composition (polar residues). Over residues Thr-99 to Glu-115 the composition is skewed to basic and acidic residues. Positions Val-116 to Pro-131 are enriched in polar residues. In terms of domain architecture, Peripheral subunit-binding (PSBD) spans Asn-128–Gln-164. The segment covering Asp-153–Gln-164 has biased composition (basic and acidic residues). The span at Gln-165–Pro-177 shows a compositional bias: low complexity. Residues His-394 and Asp-398 contribute to the active site.

Belongs to the 2-oxoacid dehydrogenase family. As to quaternary structure, forms a 24-polypeptide structural core with octahedral symmetry. Part of the 2-oxoglutarate dehydrogenase (OGDH) complex composed of E1 (2-oxoglutarate dehydrogenase), E2 (dihydrolipoamide succinyltransferase) and E3 (dihydrolipoamide dehydrogenase); the complex contains multiple copies of the three enzymatic components (E1, E2 and E3). (R)-lipoate serves as cofactor.

It carries out the reaction N(6)-[(R)-dihydrolipoyl]-L-lysyl-[protein] + succinyl-CoA = N(6)-[(R)-S(8)-succinyldihydrolipoyl]-L-lysyl-[protein] + CoA. It participates in amino-acid degradation; L-lysine degradation via saccharopine pathway; glutaryl-CoA from L-lysine: step 6/6. Functionally, E2 component of the 2-oxoglutarate dehydrogenase (OGDH) complex which catalyzes the second step in the conversion of 2-oxoglutarate to succinyl-CoA and CO(2). The protein is Dihydrolipoyllysine-residue succinyltransferase component of 2-oxoglutarate dehydrogenase complex (odhB) of Staphylococcus aureus (strain MRSA252).